The following is a 196-amino-acid chain: Serine/arginine-rich splicing factor RSZ22A (196 aa).

An RRM domain is found at 2–71; that stretch reads SRVYVGNLDP…NGWRVEQSHN (70 aa). The residue at position 48 (Ser-48) is a Phosphoserine. Over residues 58-70 the composition is skewed to basic and acidic residues; the sequence is VDGKNGWRVEQSH. Positions 58 to 196 are disordered; the sequence is VDGKNGWRVE…GLKDVRRSRS (139 aa). Residues 72–87 are compositionally biased toward gly residues; it reads RGGGGGRGGGRGGGDG. Basic and acidic residues predominate over residues 88 to 100; that stretch reads GRGRGGSDLKCYE. The CCHC-type zinc finger occupies 96-113; that stretch reads LKCYECGESGHFARECRS. The segment covering 119-135 has biased composition (basic residues); that stretch reads GRRRSRSRSRSPPRYRK. Residues Ser-136, Ser-144, Ser-146, Ser-151, Ser-159, Ser-170, and Ser-196 each carry the phosphoserine modification. Residues 139 to 149 show a composition bias toward low complexity; the sequence is YGGRRSYSPRA.

Belongs to the splicing factor SR family. RSZ subfamily. Component of the spliceosome. In terms of processing, extensively phosphorylated on serine residues in the RS domain.

The protein localises to the nucleus. In terms of biological role, probably involved in intron recognition and spliceosome assembly. This Arabidopsis thaliana (Mouse-ear cress) protein is Serine/arginine-rich splicing factor RSZ22A (RSZ22A).